We begin with the raw amino-acid sequence, 812 residues long: Probable E3 ubiquitin-protein ligase hulA (812 aa).

Residues 1–109 form the C2 domain; the sequence is MTCSQPNLRV…QMGGDEMLTR (109 aa). Disordered stretches follow at residues 131 to 235 and 250 to 350; these read NLST…WERR and RTTT…YFVD. 4 stretches are compositionally biased toward polar residues: residues 148-165, 174-199, 214-223, and 250-267; these read MQPS…ASTP, ADPT…STIV, SRTNLSSFED, and RTTT…QTSR. One can recognise a WW 1 domain in the interval 226 to 259; it reads GRLPAGWERREDNLGRTYYVDHNTRTTTWTRPSN. Over residues 276–291 the composition is skewed to basic and acidic residues; it reads LERRAHQSRMLPEDRT. Polar residues predominate over residues 292–306; sequence GASSPNLQENQQQAQ. Over residues 307–330 the composition is skewed to low complexity; that stretch reads TPPAGGSASAVSMMATGATTAGTG. WW domains are found at residues 330–363 and 390–423; these read GELP…DPRR and GPLP…DPRL. The HECT domain maps to 479 to 812; sequence SASDLKKRLM…VEETLGFGQE (334 aa). The active-site Glycyl thioester intermediate is the C780.

This sequence belongs to the RSP5/NEDD4 family. In terms of assembly, interacts with creD.

The protein resides in the cytoplasm. It carries out the reaction S-ubiquitinyl-[E2 ubiquitin-conjugating enzyme]-L-cysteine + [acceptor protein]-L-lysine = [E2 ubiquitin-conjugating enzyme]-L-cysteine + N(6)-ubiquitinyl-[acceptor protein]-L-lysine.. The protein operates within protein modification; protein ubiquitination. E3 ubiquitin-protein ligase which accepts ubiquitin from an E2 ubiquitin-conjugating enzyme in the form of a thioester and then directly transfers the ubiquitin to targeted substrates. Probably involved in the regulatory network controlling carbon source utilization. The polypeptide is Probable E3 ubiquitin-protein ligase hulA (hulA) (Aspergillus flavus (strain ATCC 200026 / FGSC A1120 / IAM 13836 / NRRL 3357 / JCM 12722 / SRRC 167)).